A 255-amino-acid chain; its full sequence is tRNA (guanine-N(7)-)-methyltransferase (255 aa).

Residues 1–11 (MSISDNSRDQL) show a composition bias toward basic and acidic residues. The disordered stretch occupies residues 1–25 (MSISDNSRDQLGELPAGRPLQSDFD). Residues glutamate 83, glutamate 108, aspartate 135, and aspartate 158 each contribute to the S-adenosyl-L-methionine site. Aspartate 158 is an active-site residue. Lysine 162 contacts substrate. Positions 164-169 (RHNKRR) are interaction with RNA. Residues aspartate 194 and 232 to 235 (TKFE) contribute to the substrate site.

Belongs to the class I-like SAM-binding methyltransferase superfamily. TrmB family.

It carries out the reaction guanosine(46) in tRNA + S-adenosyl-L-methionine = N(7)-methylguanosine(46) in tRNA + S-adenosyl-L-homocysteine. It functions in the pathway tRNA modification; N(7)-methylguanine-tRNA biosynthesis. Its function is as follows. Catalyzes the formation of N(7)-methylguanine at position 46 (m7G46) in tRNA. This is tRNA (guanine-N(7)-)-methyltransferase from Corynebacterium glutamicum (strain ATCC 13032 / DSM 20300 / JCM 1318 / BCRC 11384 / CCUG 27702 / LMG 3730 / NBRC 12168 / NCIMB 10025 / NRRL B-2784 / 534).